The chain runs to 923 residues: Mitochondrial 10-formyltetrahydrofolate dehydrogenase (923 aa).

The N-terminal 19 residues, 1 to 19, are a transit peptide targeting the mitochondrion; not cleaved; it reads MLRRGSQALRRFSTGRVYF. Residues 23–331 form a hydrolase domain region; it reads LKLALIGQSL…PASQYFSTGE (309 aa). The residue at position 31 (serine 31) is a Phosphoserine. N6-succinyllysine is present on lysine 60. 110–112 is a (6R)-10-formyltetrahydrofolate binding site; that stretch reads QFI. Histidine 128 (proton donor) is an active-site residue. Aspartate 164 is a binding site for (6R)-10-formyltetrahydrofolate. One can recognise a Carrier domain in the interval 339–416; the sequence is AEEVKVAETI…GFIQKVVRKL (78 aa). Serine 375 is modified (O-(pantetheine 4'-phosphoryl)serine). The interval 438-923 is aldehyde dehydrogenase domain; the sequence is MVKMPYQCFI…LKTKTVTLEY (486 aa). NADP(+) is bound by residues 592 to 594 and 618 to 621; these read IPW and KPAQ. Position 650 is a phosphoserine (serine 650). NADP(+) contacts are provided by residues 651-656 and 671-672; these read GGIAGQ and GS. Residue lysine 681 is modified to N6-succinyllysine. Catalysis depends on glutamate 694, which acts as the Proton acceptor. 694–695 is a binding site for NADP(+); that stretch reads EL. The Proton donor role is filled by cysteine 728. Lysine 778 is a binding site for NADP(+). An N6-succinyllysine modification is found at lysine 788. Residue 825-827 participates in NADP(+) binding; the sequence is ESF. Lysine 903 carries the N6-acetyllysine modification.

The protein in the N-terminal section; belongs to the GART family. In the C-terminal section; belongs to the aldehyde dehydrogenase family. ALDH1L subfamily. Post-translationally, phosphopantetheinylation at Ser-375 by AASDHPPT is required for the formyltetrahydrofolate dehydrogenase activity. In terms of tissue distribution, highly expressed in pancreas, heart, brain and skeletal muscle.

Its subcellular location is the mitochondrion. It carries out the reaction (6R)-10-formyltetrahydrofolate + NADP(+) + H2O = (6S)-5,6,7,8-tetrahydrofolate + CO2 + NADPH + H(+). Functionally, mitochondrial 10-formyltetrahydrofolate dehydrogenase that catalyzes the NADP(+)-dependent conversion of 10-formyltetrahydrofolate to tetrahydrofolate and carbon dioxide. This chain is Mitochondrial 10-formyltetrahydrofolate dehydrogenase, found in Homo sapiens (Human).